The following is a 115-amino-acid chain: NAD(P)H-quinone oxidoreductase subunit M, organellar chromatophore (115 aa).

This sequence belongs to the complex I NdhM subunit family. As to quaternary structure, NDH-1 can be composed of about 15 different subunits; different subcomplexes with different compositions have been identified which probably have different functions.

It is found in the plastid. It localises to the organellar chromatophore thylakoid membrane. It catalyses the reaction a plastoquinone + NADH + (n+1) H(+)(in) = a plastoquinol + NAD(+) + n H(+)(out). It carries out the reaction a plastoquinone + NADPH + (n+1) H(+)(in) = a plastoquinol + NADP(+) + n H(+)(out). NDH-1 shuttles electrons from an unknown electron donor, via FMN and iron-sulfur (Fe-S) centers, to quinones in the respiratory and/or the photosynthetic chain. The immediate electron acceptor for the enzyme in this species is believed to be plastoquinone. Couples the redox reaction to proton translocation, and thus conserves the redox energy in a proton gradient. The polypeptide is NAD(P)H-quinone oxidoreductase subunit M, organellar chromatophore (Paulinella chromatophora).